The chain runs to 448 residues: UPF0053 protein sll0260 (448 aa).

The region spanning 2 to 203 (FSSSVELELF…AQAGMIDEAE (202 aa)) is the CNNM transmembrane domain. 4 helical membrane passes run 11 to 31 (FFIF…IAIV), 62 to 82 (FLSA…AVGG), 106 to 126 (LSIS…GELV), and 142 to 162 (VAPA…LLGV). CBS domains lie at 222-281 (MTPR…GQKI) and 286-345 (IVQP…NDDE).

It belongs to the UPF0053 family.

It localises to the cell membrane. This Synechocystis sp. (strain ATCC 27184 / PCC 6803 / Kazusa) protein is UPF0053 protein sll0260.